The following is a 348-amino-acid chain: D-erythrose-4-phosphate dehydrogenase (348 aa).

NAD(+)-binding positions include arginine 12–isoleucine 13 and arginine 81. Substrate contacts are provided by residues serine 154–threonine 156, arginine 200, threonine 213–lysine 214, and arginine 236. Catalysis depends on cysteine 155, which acts as the Nucleophile. Asparagine 318 lines the NAD(+) pocket.

This sequence belongs to the glyceraldehyde-3-phosphate dehydrogenase family. Epd subfamily. As to quaternary structure, homotetramer.

It is found in the cytoplasm. It catalyses the reaction D-erythrose 4-phosphate + NAD(+) + H2O = 4-phospho-D-erythronate + NADH + 2 H(+). It participates in cofactor biosynthesis; pyridoxine 5'-phosphate biosynthesis; pyridoxine 5'-phosphate from D-erythrose 4-phosphate: step 1/5. In terms of biological role, catalyzes the NAD-dependent conversion of D-erythrose 4-phosphate to 4-phosphoerythronate. This Salmonella schwarzengrund (strain CVM19633) protein is D-erythrose-4-phosphate dehydrogenase.